A 431-amino-acid chain; its full sequence is Leucine carboxyl methyltransferase 1 (431 aa).

S-adenosyl-L-methionine is bound by residues arginine 103, glycine 131, aspartate 159, and aspartate 219–leucine 220. The disordered stretch occupies residues glutamine 228–glutamine 268. Glutamate 289 serves as a coordination point for S-adenosyl-L-methionine.

Belongs to the methyltransferase superfamily. LCMT family.

It carries out the reaction [phosphatase 2A protein]-C-terminal L-leucine + S-adenosyl-L-methionine = [phosphatase 2A protein]-C-terminal L-leucine methyl ester + S-adenosyl-L-homocysteine. Functionally, methylates the carboxyl group of the C-terminal leucine residue of protein phosphatase 2A catalytic subunits to form alpha-leucine ester residues. The protein is Leucine carboxyl methyltransferase 1 (ppm-1) of Neurospora crassa (strain ATCC 24698 / 74-OR23-1A / CBS 708.71 / DSM 1257 / FGSC 987).